A 1309-amino-acid chain; its full sequence is DNA repair protein RAD9 (1309 aa).

The span at M1–A19 shows a compositional bias: polar residues. Residues M1 to P39 are disordered. A phosphoserine mark is found at S26, S56, and S205. Phosphothreonine is present on T218. S248 carries the post-translational modification Phosphoserine. A disordered region spans residues N280–S299. Residues I284–S299 show a composition bias toward basic and acidic residues. Phosphoserine is present on residues S312 and S315. Positions N342–N365 are disordered. Positions S343–N352 are enriched in polar residues. The residue at position 462 (S462) is a Phosphoserine. Phosphothreonine occurs at positions 471 and 474. Residues P490–E512 are disordered. The segment covering E491–P508 has biased composition (polar residues). S568 bears the Phosphoserine mark. Disordered stretches follow at residues K636–D655 and I691–L731. Residues L642–D655 are compositionally biased toward basic and acidic residues. Residue S729 is modified to Phosphoserine. Positions R994–Y1122 constitute a BRCT domain.

In terms of assembly, physically associates with RAD53.

It localises to the nucleus. Functionally, essential for cell cycle arrest at the G2 stage following DNA damage by X-irradiation or inactivation of DNA ligase. The protein is DNA repair protein RAD9 (RAD9) of Saccharomyces cerevisiae (strain ATCC 204508 / S288c) (Baker's yeast).